Reading from the N-terminus, the 475-residue chain is Aspartyl/glutamyl-tRNA(Asn/Gln) amidotransferase subunit B (475 aa).

It belongs to the GatB/GatE family. GatB subfamily. In terms of assembly, heterotrimer of A, B and C subunits.

It carries out the reaction L-glutamyl-tRNA(Gln) + L-glutamine + ATP + H2O = L-glutaminyl-tRNA(Gln) + L-glutamate + ADP + phosphate + H(+). The enzyme catalyses L-aspartyl-tRNA(Asn) + L-glutamine + ATP + H2O = L-asparaginyl-tRNA(Asn) + L-glutamate + ADP + phosphate + 2 H(+). Functionally, allows the formation of correctly charged Asn-tRNA(Asn) or Gln-tRNA(Gln) through the transamidation of misacylated Asp-tRNA(Asn) or Glu-tRNA(Gln) in organisms which lack either or both of asparaginyl-tRNA or glutaminyl-tRNA synthetases. The reaction takes place in the presence of glutamine and ATP through an activated phospho-Asp-tRNA(Asn) or phospho-Glu-tRNA(Gln). The chain is Aspartyl/glutamyl-tRNA(Asn/Gln) amidotransferase subunit B from Bacillus cereus (strain ZK / E33L).